The following is a 312-amino-acid chain: Elongation factor Ts (312 aa).

Residues 80 to 83 form an involved in Mg(2+) ion dislocation from EF-Tu region; sequence TDFV.

It belongs to the EF-Ts family.

It is found in the cytoplasm. In terms of biological role, associates with the EF-Tu.GDP complex and induces the exchange of GDP to GTP. It remains bound to the aminoacyl-tRNA.EF-Tu.GTP complex up to the GTP hydrolysis stage on the ribosome. This is Elongation factor Ts from Maricaulis maris (strain MCS10) (Caulobacter maris).